We begin with the raw amino-acid sequence, 168 residues long: uncharacterized protein (168 aa).

2 disordered regions span residues 1 to 81 (MSSA…GRSW) and 119 to 150 (RDLS…STVA). A compositionally biased stretch (low complexity) spans 7–34 (SRTSRSKATGASSSSISSSIRASPSSSS). Residues 43 to 67 (TRRRRRRTGRRSTKRSIISPRRRRM) are compositionally biased toward basic residues. A compositionally biased stretch (polar residues) spans 123–146 (ESASTGSENLSRKASNQSQSQGRL).

This is an uncharacterized protein from Human adenovirus C serotype 2 (HAdV-2).